The sequence spans 389 residues: Serpin-Z3 (389 aa).

Residues 337-361 (GTEAAAVSVAIMMPQCLMRNPDFVA) are RCL.

The protein belongs to the serpin family.

In terms of biological role, probable serine protease inhibitor. The polypeptide is Serpin-Z3 (Arabidopsis thaliana (Mouse-ear cress)).